The following is a 640-amino-acid chain: Calpain-5 (640 aa).

In terms of domain architecture, Calpain catalytic spans 26-343 (LFEDPHFPAS…FTDIIKCRLI (318 aa)). Catalysis depends on residues cysteine 81, histidine 252, and asparagine 284. The segment at 344 to 496 (NTSYLSIHKT…VFTDVPSNCR (153 aa)) is domain III. The C2 domain occupies 499–617 (RLDEPPRTCW…HSLHLQDRSG (119 aa)).

Belongs to the peptidase C2 family.

Its function is as follows. Calcium-regulated non-lysosomal thiol-protease. This is Calpain-5 (Capn5) from Rattus norvegicus (Rat).